Reading from the N-terminus, the 276-residue chain is Flagellin FljJ (276 aa).

Positions 51-80 are disordered; the sequence is RPGAGDMSGLAREDEPGSGDIDRGRGPRAG. A compositionally biased stretch (basic and acidic residues) spans 61–75; the sequence is AREDEPGSGDIDRGR.

Belongs to the bacterial flagellin family. As to quaternary structure, in C.crescentus, the flagellar filament is composed of multiple flagellins of 29 kDa; 27 kDa and 25 kDa.

It is found in the secreted. It localises to the bacterial flagellum. In terms of biological role, flagellin is the subunit protein which polymerizes to form the filaments of bacterial flagella. The protein is Flagellin FljJ (fljJ) of Caulobacter vibrioides (strain ATCC 19089 / CIP 103742 / CB 15) (Caulobacter crescentus).